Here is a 236-residue protein sequence, read N- to C-terminus: ATP synthase subunit 4, mitochondrial (236 aa).

Residues 1 to 29 (MAFRALTTKAAARPLLALGPRSVAMGARY) constitute a mitochondrion transit peptide.

Belongs to the eukaryotic ATPase subunit B family. In terms of assembly, F-type ATPases have 2 components, CF(1) - the catalytic core - and CF(0) - the membrane proton channel. In yeast, the dimeric form of ATP synthase consists of 17 polypeptides: alpha, beta, gamma, delta, epsilon, 4 (B), 5 (OSCP), 6 (A), 8, 9 (C), d, E (Tim11), f, g, h, i/j and k.

Its subcellular location is the mitochondrion. It localises to the mitochondrion inner membrane. In terms of biological role, mitochondrial membrane ATP synthase (F(1)F(0) ATP synthase or Complex V) produces ATP from ADP in the presence of a proton gradient across the membrane which is generated by electron transport complexes of the respiratory chain. F-type ATPases consist of two structural domains, F(1) - containing the extramembraneous catalytic core, and F(0) - containing the membrane proton channel, linked together by a central stalk and a peripheral stalk. During catalysis, ATP synthesis in the catalytic domain of F(1) is coupled via a rotary mechanism of the central stalk subunits to proton translocation. Part of the complex F(0) domain and the peripheric stalk, which acts as a stator to hold the catalytic alpha(3)beta(3) subcomplex and subunit a/ATP6 static relative to the rotary elements. This chain is ATP synthase subunit 4, mitochondrial (ATP4), found in Eremothecium gossypii (strain ATCC 10895 / CBS 109.51 / FGSC 9923 / NRRL Y-1056) (Yeast).